Consider the following 1433-residue polypeptide: DNA-directed RNA polymerase subunit beta' (1433 aa).

C66, C68, C81, and C84 together coordinate Zn(2+). Mg(2+) contacts are provided by D473, D475, and D477. Zn(2+)-binding residues include C815, C889, C896, and C899.

This sequence belongs to the RNA polymerase beta' chain family. The RNAP catalytic core consists of 2 alpha, 1 beta, 1 beta' and 1 omega subunit. When a sigma factor is associated with the core the holoenzyme is formed, which can initiate transcription. Mg(2+) is required as a cofactor. Zn(2+) serves as cofactor.

The enzyme catalyses RNA(n) + a ribonucleoside 5'-triphosphate = RNA(n+1) + diphosphate. Its function is as follows. DNA-dependent RNA polymerase catalyzes the transcription of DNA into RNA using the four ribonucleoside triphosphates as substrates. The protein is DNA-directed RNA polymerase subunit beta' of Porphyromonas gingivalis (strain ATCC BAA-308 / W83).